Reading from the N-terminus, the 177-residue chain is Putative 3-methyladenine DNA glycosylase (177 aa).

Belongs to the DNA glycosylase MPG family.

This Rickettsia felis (strain ATCC VR-1525 / URRWXCal2) (Rickettsia azadi) protein is Putative 3-methyladenine DNA glycosylase.